Here is a 663-residue protein sequence, read N- to C-terminus: UvrABC system protein B (663 aa).

The 158-residue stretch at 31–188 (DNIEGGEKAQ…NDLVDIQFER (158 aa)) folds into the Helicase ATP-binding domain. Position 44 to 51 (44 to 51 (GATGTGKT)) interacts with ATP. A Beta-hairpin motif is present at residues 97 to 120 (YYDYYQPEAYVPSSDTYIEKDSSV). In terms of domain architecture, Helicase C-terminal spans 435–601 (QMDDLLGEIN…TIKKDIRDLI (167 aa)). The region spanning 627-662 (QEAIKKLQKQMQEAAELLDFELAAQIRDMVLELKAM) is the UVR domain.

The protein belongs to the UvrB family. Forms a heterotetramer with UvrA during the search for lesions. Interacts with UvrC in an incision complex.

It is found in the cytoplasm. In terms of biological role, the UvrABC repair system catalyzes the recognition and processing of DNA lesions. A damage recognition complex composed of 2 UvrA and 2 UvrB subunits scans DNA for abnormalities. Upon binding of the UvrA(2)B(2) complex to a putative damaged site, the DNA wraps around one UvrB monomer. DNA wrap is dependent on ATP binding by UvrB and probably causes local melting of the DNA helix, facilitating insertion of UvrB beta-hairpin between the DNA strands. Then UvrB probes one DNA strand for the presence of a lesion. If a lesion is found the UvrA subunits dissociate and the UvrB-DNA preincision complex is formed. This complex is subsequently bound by UvrC and the second UvrB is released. If no lesion is found, the DNA wraps around the other UvrB subunit that will check the other stand for damage. This Streptococcus mutans serotype c (strain ATCC 700610 / UA159) protein is UvrABC system protein B.